The primary structure comprises 157 residues: Endoribonuclease YbeY (157 aa).

Zn(2+) contacts are provided by H114, H118, and H124.

This sequence belongs to the endoribonuclease YbeY family. It depends on Zn(2+) as a cofactor.

It localises to the cytoplasm. Single strand-specific metallo-endoribonuclease involved in late-stage 70S ribosome quality control and in maturation of the 3' terminus of the 16S rRNA. In Salmonella paratyphi A (strain AKU_12601), this protein is Endoribonuclease YbeY.